Here is a 169-residue protein sequence, read N- to C-terminus: Putative lipocalin R877 (169 aa).

Positions 1–18 (MWIIILIVIIVIITIIFS) are cleaved as a signal peptide.

Belongs to the calycin superfamily. Lipocalin family.

The protein resides in the secreted. The protein localises to the virion. Could play a role in the transport of a small ligand. The chain is Putative lipocalin R877 from Acanthamoeba polyphaga mimivirus (APMV).